Here is a 376-residue protein sequence, read N- to C-terminus: Erythronate-4-phosphate dehydrogenase (376 aa).

Positions 45 and 67 each coordinate substrate. Asp-147 contacts NAD(+). Residue Arg-209 is part of the active site. Asp-233 is a binding site for NAD(+). Glu-238 is an active-site residue. Catalysis depends on His-255, which acts as the Proton donor. Gly-258 contributes to the NAD(+) binding site. Tyr-259 provides a ligand contact to substrate.

Belongs to the D-isomer specific 2-hydroxyacid dehydrogenase family. PdxB subfamily. As to quaternary structure, homodimer.

Its subcellular location is the cytoplasm. The catalysed reaction is 4-phospho-D-erythronate + NAD(+) = (R)-3-hydroxy-2-oxo-4-phosphooxybutanoate + NADH + H(+). The protein operates within cofactor biosynthesis; pyridoxine 5'-phosphate biosynthesis; pyridoxine 5'-phosphate from D-erythrose 4-phosphate: step 2/5. Functionally, catalyzes the oxidation of erythronate-4-phosphate to 3-hydroxy-2-oxo-4-phosphonooxybutanoate. The sequence is that of Erythronate-4-phosphate dehydrogenase from Shewanella oneidensis (strain ATCC 700550 / JCM 31522 / CIP 106686 / LMG 19005 / NCIMB 14063 / MR-1).